The primary structure comprises 224 residues: UPF0173 metal-dependent hydrolase TON_1314 (224 aa).

This sequence belongs to the UPF0173 family.

This chain is UPF0173 metal-dependent hydrolase TON_1314, found in Thermococcus onnurineus (strain NA1).